Reading from the N-terminus, the 285-residue chain is PHO85 cyclin-7 (285 aa).

Positions 1–14 (MELSSPSKKTTTSP) are enriched in low complexity. The segment at 1–42 (MELSSPSKKTTTSPINIPGGNRDNLIIGPHSHSFKTDPFSSN) is disordered. A Phosphoserine modification is found at Ser-69.

It belongs to the cyclin family. PHO80 subfamily. Forms a cyclin-CDK complex with PHO85. Interacts with the substrate proteins MMR1 and YJL084C. Interacts with the CDK inhibitor (CKI) PHO81.

It is found in the cytoplasm. Its activity is regulated as follows. The PCL7-PHO85 cyclin-CDK is inhibited by PHO81 in low-phosphate conditions. Cyclin partner of the cyclin-dependent kinase (CDK) PHO85. Together with cyclin PCL6, controls glycogen phosphorylase and glycogen synthase activities in response to nutrient availablility. The PCL7-PHO85 cyclin-CDK holoenzyme has GLC8 kinase activity and phosphorylates and inactivates the phosphatase PP1-2 inhibitor GLC8, causing activation of PP1-2, which then dephosphorylates and activates glycogen phosphorylase. PCL7-PHO85 also phosphorylates MMR1 and YJL084C. The polypeptide is PHO85 cyclin-7 (PCL7) (Saccharomyces cerevisiae (strain ATCC 204508 / S288c) (Baker's yeast)).